We begin with the raw amino-acid sequence, 181 residues long: ATP-dependent protease subunit HslV (181 aa).

Residue Thr6 is part of the active site. Positions 162, 165, and 168 each coordinate Na(+).

It belongs to the peptidase T1B family. HslV subfamily. A double ring-shaped homohexamer of HslV is capped on each side by a ring-shaped HslU homohexamer. The assembly of the HslU/HslV complex is dependent on binding of ATP.

It is found in the cytoplasm. It carries out the reaction ATP-dependent cleavage of peptide bonds with broad specificity.. With respect to regulation, allosterically activated by HslU binding. In terms of biological role, protease subunit of a proteasome-like degradation complex believed to be a general protein degrading machinery. This is ATP-dependent protease subunit HslV from Nitratidesulfovibrio vulgaris (strain ATCC 29579 / DSM 644 / CCUG 34227 / NCIMB 8303 / VKM B-1760 / Hildenborough) (Desulfovibrio vulgaris).